A 660-amino-acid chain; its full sequence is ATPase-like fidgetin (660 aa).

Disordered stretches follow at residues 141 to 186 (KQIY…EDPF) and 209 to 334 (ALSS…ADSK). Residues 145-161 (SKHSPPSTSTSSIVSSS) show a composition bias toward low complexity. The residue at position 177 (S177) is a Phosphoserine. Residues 213-239 (DTGRSATMNSTTFPTAMKSQSTTKPTL) are compositionally biased toward polar residues. Residues 240–255 (SNSVSSPSIQVSNNQN) show a composition bias toward low complexity. Positions 301-313 (LNSSHDTLGSSTR) are enriched in polar residues. Positions 314–333 (PSSADTAGSPATSPPATADS) are enriched in low complexity. Residue 419–426 (GPPGTGKT) coordinates ATP.

This sequence belongs to the AAA ATPase family.

The protein resides in the nucleus. In Schizosaccharomyces pombe (strain 972 / ATCC 24843) (Fission yeast), this protein is ATPase-like fidgetin (alf1).